The following is a 360-amino-acid chain: Cyclin-D1-binding protein 1 (360 aa).

Ala-2 bears the N-acetylalanine mark. Interaction with TCF3 stretches follow at residues 2–184 and 150–360; these read ASAT…VDFV and ISYN…ELEL. Interaction with RPLP0 stretches follow at residues 2 to 190 and 240 to 360; these read ASAT…AHEE and LIIP…ELEL. Residues 2–208 form a required for interaction with CCND1 region; the sequence is ASATAPAAAV…DPYSGLLNDT (207 aa).

The protein belongs to the CCNDBP1 family. In terms of assembly, interacts with CCND1 and GRAP2. May also interact with COPS5, RPLP0, SIRT6, SYF2 and TCF3. Phosphorylated.

The protein resides in the cytoplasm. It is found in the nucleus. May negatively regulate cell cycle progression. May act at least in part via inhibition of the cyclin-D1/CDK4 complex, thereby preventing phosphorylation of RB1 and blocking E2F-dependent transcription. The sequence is that of Cyclin-D1-binding protein 1 (CCNDBP1) from Pongo abelii (Sumatran orangutan).